The following is a 371-amino-acid chain: Mitogen-activated protein kinase homolog NTF6 (371 aa).

The Protein kinase domain occupies 38-324 (IPPIQPVGRG…VEDALNHPFL (287 aa)). ATP contacts are provided by residues 44 to 52 (VGRGAYGMV) and Lys67. Catalysis depends on Asp164, which acts as the Proton acceptor. The residue at position 196 (Thr196) is a Phosphothreonine. Positions 196 to 198 (TEY) match the TXY motif. Tyr198 bears the Phosphotyrosine mark.

The protein belongs to the protein kinase superfamily. CMGC Ser/Thr protein kinase family. MAP kinase subfamily. Mg(2+) is required as a cofactor. Dually phosphorylated on Thr-196 and Tyr-198, which activates the enzyme. Very low autophosphorylation, although dramatically increased when Mn(2+) is added to the reaction instead of Mg(2+).

It carries out the reaction L-seryl-[protein] + ATP = O-phospho-L-seryl-[protein] + ADP + H(+). The catalysed reaction is L-threonyl-[protein] + ATP = O-phospho-L-threonyl-[protein] + ADP + H(+). With respect to regulation, activated by tyrosine and threonine phosphorylation. This is Mitogen-activated protein kinase homolog NTF6 (NTF6) from Nicotiana tabacum (Common tobacco).